The sequence spans 217 residues: Small ribosomal subunit protein uS3c (217 aa).

Residues 47 to 119 (VRTHIKSSSN…KLHIAIEKVA (73 aa)) form the KH type-2 domain.

This sequence belongs to the universal ribosomal protein uS3 family. In terms of assembly, part of the 30S ribosomal subunit.

It localises to the plastid. The protein localises to the chloroplast. The chain is Small ribosomal subunit protein uS3c (rps3) from Pinus thunbergii (Japanese black pine).